Here is a 272-residue protein sequence, read N- to C-terminus: 3-methyl-2-oxobutanoate hydroxymethyltransferase (272 aa).

Positions 51 and 90 each coordinate Mg(2+). 3-methyl-2-oxobutanoate contacts are provided by residues 51–52 (DS), D90, and K120. Position 122 (E122) interacts with Mg(2+). E189 (proton acceptor) is an active-site residue.

It belongs to the PanB family. In terms of assembly, homodecamer; pentamer of dimers. Requires Mg(2+) as cofactor.

The protein resides in the cytoplasm. The enzyme catalyses 3-methyl-2-oxobutanoate + (6R)-5,10-methylene-5,6,7,8-tetrahydrofolate + H2O = 2-dehydropantoate + (6S)-5,6,7,8-tetrahydrofolate. It participates in cofactor biosynthesis; (R)-pantothenate biosynthesis; (R)-pantoate from 3-methyl-2-oxobutanoate: step 1/2. Functionally, catalyzes the reversible reaction in which hydroxymethyl group from 5,10-methylenetetrahydrofolate is transferred onto alpha-ketoisovalerate to form ketopantoate. The polypeptide is 3-methyl-2-oxobutanoate hydroxymethyltransferase (Syntrophus aciditrophicus (strain SB)).